Here is a 138-residue protein sequence, read N- to C-terminus: Large ribosomal subunit protein uL29 (138 aa).

Positions 1 to 79 (MAKSKMLDLR…TNKVIKADYN (79 aa)) are large ribosomal subunit protein uL29. Positions 80–138 (KAVEEAEKAGKEVRAKQRKFLEEQYGQQSQTKVNEADIQKAMQAAEQETVEPDTKGETK) are unknown. The segment at 103 to 138 (QYGQQSQTKVNEADIQKAMQAAEQETVEPDTKGETK) is disordered.

It belongs to the universal ribosomal protein uL29 family.

The polypeptide is Large ribosomal subunit protein uL29 (Mycoplasma capricolum subsp. capricolum (strain California kid / ATCC 27343 / NCTC 10154)).